A 221-amino-acid chain; its full sequence is Ras-related protein RabS (221 aa).

Position 16–23 (16–23) interacts with GTP; sequence GDNQCGKS. Residues 38 to 47 carry the Effector region motif; the sequence is GIQLWHGIEI. GTP contacts are provided by residues 71-75 and 137-140; these read DGNGG and NKCD. Residue Cys218 is modified to Cysteine methyl ester. Residue Cys218 is the site of S-geranylgeranyl cysteine attachment. The propeptide at 219–221 is removed in mature form; the sequence is IIN.

Belongs to the small GTPase superfamily. Rab family.

The protein localises to the cell membrane. This chain is Ras-related protein RabS (rabS), found in Dictyostelium discoideum (Social amoeba).